The sequence spans 403 residues: Basic leucine zipper 25 (403 aa).

Disordered stretches follow at residues 13–128 (SFWP…APVV) and 156–259 (VKPE…EFDT). The segment covering 24-33 (PGSSSTPSPT) has biased composition (low complexity). Polar residues predominate over residues 56–69 (LSGSDSSPTTNTIE). 2 stretches are compositionally biased toward low complexity: residues 115 to 128 (APSS…APVV) and 161 to 174 (SSAS…AQGS). The span at 175-195 (IVAQTSPGASSVRFSPTTSTQ) shows a compositional bias: polar residues. Over residues 212 to 226 (DSDDDDLDGDADNGD) the composition is skewed to acidic residues. Residue Ser-213 is modified to Phosphoserine. In terms of domain architecture, bZIP spans 229–292 (DVKRARRMLS…DAAAVDNRIL (64 aa)). The basic motif stretch occupies residues 231–250 (KRARRMLSNRESARRSRRRK). Positions 233–240 (ARRMLSNR) match the Nuclear localization signal motif. Positions 264–271 (LRAEHSTL) are leucine-zipper. Residues 332–345 (NTPSASSSIPPNSN) show a composition bias toward low complexity. Disordered regions lie at residues 332-361 (NTPS…SAGL) and 380-403 (EGMQ…NHKH). Residues 351 to 361 (ANSSTNTSAGL) are compositionally biased toward polar residues.

The protein belongs to the bZIP family. In terms of assembly, homodimer. Forms a heterodimer with BZIP1, BZIP1, BZIP2, BZIP9, BZIP11, BZIP44, BZIP53 and BZIP63. Interacts with ABI3 and forms a complex made of ABI3, BZIP53 and BZIP25. As to expression, expressed in roots, shoots, stems, leaves, stipulae, siliques, seeds, pollen, and flowers.

The protein resides in the nucleus. Its function is as follows. Transcription factor that binds to the 5'-ACGT-3' box, especially present in G-box-like motif (5'-CCACGTGGCC-3'), ABRE elements, of seed storage protein (SSP) encoding gene promoters (e.g. At2S and CRU3) and promotes their expression in seeds when in complex with ABI3 and BZIP53. This Arabidopsis thaliana (Mouse-ear cress) protein is Basic leucine zipper 25 (BZIP25).